Consider the following 186-residue polypeptide: Elongation factor P (186 aa).

The protein belongs to the elongation factor P family.

It localises to the cytoplasm. It functions in the pathway protein biosynthesis; polypeptide chain elongation. Involved in peptide bond synthesis. Stimulates efficient translation and peptide-bond synthesis on native or reconstituted 70S ribosomes in vitro. Probably functions indirectly by altering the affinity of the ribosome for aminoacyl-tRNA, thus increasing their reactivity as acceptors for peptidyl transferase. This is Elongation factor P from Pelagibacter ubique (strain HTCC1062).